The following is a 418-amino-acid chain: UDP-N-acetylglucosamine 1-carboxyvinyltransferase (418 aa).

22–23 (KN) is a binding site for phosphoenolpyruvate. Residue Arg93 coordinates UDP-N-acetyl-alpha-D-glucosamine. Cys117 serves as the catalytic Proton donor. A 2-(S-cysteinyl)pyruvic acid O-phosphothioketal modification is found at Cys117. Residues Asp306 and Ile328 each coordinate UDP-N-acetyl-alpha-D-glucosamine.

The protein belongs to the EPSP synthase family. MurA subfamily.

The protein resides in the cytoplasm. The enzyme catalyses phosphoenolpyruvate + UDP-N-acetyl-alpha-D-glucosamine = UDP-N-acetyl-3-O-(1-carboxyvinyl)-alpha-D-glucosamine + phosphate. It functions in the pathway cell wall biogenesis; peptidoglycan biosynthesis. Functionally, cell wall formation. Adds enolpyruvyl to UDP-N-acetylglucosamine. The sequence is that of UDP-N-acetylglucosamine 1-carboxyvinyltransferase from Hydrogenovibrio crunogenus (strain DSM 25203 / XCL-2) (Thiomicrospira crunogena).